The sequence spans 322 residues: Sideroflexin fsf1 (322 aa).

4 helical membrane passes run 143–163 (SYIY…KIVP), 175–195 (VLGR…NVFL), 229–249 (TALS…LVLM), and 269–289 (LGLI…VFPA).

Belongs to the sideroflexin family.

It is found in the mitochondrion membrane. Mitochondrial amino-acid transporter that mediates transport of serine into mitochondria. The polypeptide is Sideroflexin fsf1 (Schizosaccharomyces pombe (strain 972 / ATCC 24843) (Fission yeast)).